Here is an 814-residue protein sequence, read N- to C-terminus: Acyl-coenzyme A dehydrogenase (814 aa).

Residue E497 is the Proton acceptor of the active site.

Belongs to the acyl-CoA dehydrogenase family. The cofactor is FAD.

The catalysed reaction is a medium-chain 2,3-saturated fatty acyl-CoA + oxidized [electron-transfer flavoprotein] + H(+) = a medium-chain (2E)-enoyl-CoA + reduced [electron-transfer flavoprotein]. The enzyme catalyses a long-chain 2,3-saturated fatty acyl-CoA + oxidized [electron-transfer flavoprotein] + H(+) = a long-chain (2E)-enoyl-CoA + reduced [electron-transfer flavoprotein]. The protein operates within lipid metabolism; fatty acid beta-oxidation. In terms of biological role, catalyzes the dehydrogenation of acyl-coenzymes A (acyl-CoAs) to 2-enoyl-CoAs, the first step of the beta-oxidation cycle of fatty acid degradation. Is required for the utilization of medium- and long-chain fatty acids as sole carbon sources for growth. This is Acyl-coenzyme A dehydrogenase (fadE) from Escherichia coli O157:H7.